Here is a 390-residue protein sequence, read N- to C-terminus: 8-amino-7-oxononanoate synthase (390 aa).

Position 20 (R20) interacts with substrate. A pyridoxal 5'-phosphate-binding site is contributed by 107 to 108; the sequence is GF. H132 lines the substrate pocket. Pyridoxal 5'-phosphate contacts are provided by residues S179, 204–207, and 235–238; these read DDAH and TLSK. An N6-(pyridoxal phosphate)lysine modification is found at K238. T352 lines the substrate pocket.

It belongs to the class-II pyridoxal-phosphate-dependent aminotransferase family. BioF subfamily. As to quaternary structure, homodimer. Pyridoxal 5'-phosphate is required as a cofactor.

The catalysed reaction is 6-carboxyhexanoyl-[ACP] + L-alanine + H(+) = (8S)-8-amino-7-oxononanoate + holo-[ACP] + CO2. The protein operates within cofactor biosynthesis; biotin biosynthesis. Its function is as follows. Catalyzes the decarboxylative condensation of pimeloyl-[acyl-carrier protein] and L-alanine to produce 8-amino-7-oxononanoate (AON), [acyl-carrier protein], and carbon dioxide. The sequence is that of 8-amino-7-oxononanoate synthase from Exiguobacterium sibiricum (strain DSM 17290 / CCUG 55495 / CIP 109462 / JCM 13490 / 255-15).